The chain runs to 189 residues: Protein osa (189 aa).

Functionally, suppression of A.tumefaciens oncogenicity. The chain is Protein osa (osa) from Shigella flexneri.